The following is a 286-amino-acid chain: UPF0761 membrane protein KPN78578_41360 (286 aa).

A run of 7 helical transmembrane segments spans residues 44–64, 74–94, 104–124, 140–160, 183–203, 210–230, and 244–264; these read LLSLVPLIAVVFALFAAFPMF, FIFANFIPATGDVIQGYIEQF, VGAFGLIVTSLLLMYSIDSAL, FAVYWMILTLGPLLAGASLAI, LFPLILSWAAFWLLYSIVPTT, AVIGALVAALLFEAGKKAFAL, and VISVVPILFVWVYWTWCIVLL.

The protein belongs to the UPF0761 family.

The protein localises to the cell inner membrane. The polypeptide is UPF0761 membrane protein KPN78578_41360 (Klebsiella pneumoniae subsp. pneumoniae (strain ATCC 700721 / MGH 78578)).